The sequence spans 673 residues: Beta-galactosidase 8 (673 aa).

Positions 1-20 are cleaved as a signal peptide; it reads MGPSRSFQNLLLLLLPLALA. N-linked (GlcNAc...) asparagine glycosylation is present at N38. E189 functions as the Proton donor in the catalytic mechanism. An N-linked (GlcNAc...) asparagine glycan is attached at N230. E272 (nucleophile) is an active-site residue. 5 N-linked (GlcNAc...) asparagine glycosylation sites follow: N304, N329, N401, N489, and N540.

The protein belongs to the glycosyl hydrolase 35 family.

It localises to the secreted. Its subcellular location is the extracellular space. It is found in the apoplast. The catalysed reaction is Hydrolysis of terminal non-reducing beta-D-galactose residues in beta-D-galactosides.. The chain is Beta-galactosidase 8 from Oryza sativa subsp. japonica (Rice).